The primary structure comprises 199 residues: Peroxynitrite isomerase (199 aa).

Positions 20–26 match the GXWXGXG motif; sequence GVWEGTG. His190 is a heme b binding site.

Belongs to the nitrobindin family. As to quaternary structure, homodimer. Heme b serves as cofactor.

It catalyses the reaction peroxynitrite = nitrate. It participates in nitrogen metabolism. Heme-binding protein able to scavenge peroxynitrite and to protect free L-tyrosine against peroxynitrite-mediated nitration, by acting as a peroxynitrite isomerase that converts peroxynitrite to nitrate. Therefore, this protein likely plays a role in peroxynitrite sensing and in the detoxification of reactive nitrogen and oxygen species (RNS and ROS, respectively). Is able to bind nitric oxide (NO) in vitro, but may act as a sensor of peroxynitrite levels in vivo. This is Peroxynitrite isomerase from Clavibacter michiganensis subsp. michiganensis (strain NCPPB 382).